The chain runs to 201 residues: TATA-box-binding protein 2 (201 aa).

2 consecutive repeat copies span residues 26 to 102 (LQNI…ARII) and 116 to 193 (IQNI…YPVL).

This sequence belongs to the TBP family. As to quaternary structure, belongs to the TFIID complex together with the TBP-associated factors (TAFs). Binds DNA as monomer.

Its subcellular location is the nucleus. Functionally, general transcription factor that functions at the core of the DNA-binding multiprotein factor TFIID. Binding of TFIID to the TATA box is the initial transcriptional step of the pre-initiation complex (PIC), playing a role in the activation of eukaryotic genes transcribed by RNA polymerase II. This chain is TATA-box-binding protein 2 (TBP2), found in Triticum aestivum (Wheat).